The sequence spans 581 residues: AP2-like ethylene-responsive transcription factor AIL6 (581 aa).

Disordered regions lie at residues valine 105–glutamine 132 and asparagine 205–glutamate 240. Low complexity-rich tracts occupy residues serine 108–glutamine 122 and arginine 218–asparagine 232. 2 DNA-binding regions (AP2/ERF) span residues isoleucine 268–proline 331 and isoleucine 367–glutamate 425.

It belongs to the AP2/ERF transcription factor family. AP2 subfamily. In terms of tissue distribution, expressed in roots, seedlings, hypocotyl, inflorescence, siliques, and pistils. Also detected at low levels in leaves.

It is found in the nucleus. In terms of biological role, probably acts as a transcriptional activator. Binds to the GCC-box pathogenesis-related promoter element. May be involved in the regulation of gene expression by stress factors and by components of stress signal transduction pathways. The polypeptide is AP2-like ethylene-responsive transcription factor AIL6 (Arabidopsis thaliana (Mouse-ear cress)).